Consider the following 227-residue polypeptide: uncharacterized protein (227 aa).

Transmembrane regions (helical) follow at residues 109–128, 173–192, and 199–221; these read MCNV…FAGI, AILL…ILLT, and ALRV…VMMG.

Its subcellular location is the cell membrane. This is an uncharacterized protein from Archaeoglobus fulgidus (strain ATCC 49558 / DSM 4304 / JCM 9628 / NBRC 100126 / VC-16).